Here is a 210-residue protein sequence, read N- to C-terminus: NADH dehydrogenase [ubiquinone] iron-sulfur protein 8, mitochondrial (210 aa).

The transit peptide at Met1–Ala34 directs the protein to the mitochondrion. 4Fe-4S ferredoxin-type domains follow at residues Arg102–Glu131 and Thr141–Asn170. The [4Fe-4S] cluster site is built by Cys111, Cys114, Cys117, Cys121, Cys150, Cys153, Cys156, and Cys160.

The protein belongs to the complex I 23 kDa subunit family. In terms of assembly, core subunit of respiratory chain NADH dehydrogenase (Complex I) which is composed of 45 different subunits. This is a component of the iron-sulfur (IP) fragment of the enzyme. Interacts with RAB5IF. The cofactor is [4Fe-4S] cluster.

It localises to the mitochondrion inner membrane. It catalyses the reaction a ubiquinone + NADH + 5 H(+)(in) = a ubiquinol + NAD(+) + 4 H(+)(out). Its function is as follows. Core subunit of the mitochondrial membrane respiratory chain NADH dehydrogenase (Complex I) which catalyzes electron transfer from NADH through the respiratory chain, using ubiquinone as an electron acceptor. Essential for the catalytic activity and assembly of complex I. The chain is NADH dehydrogenase [ubiquinone] iron-sulfur protein 8, mitochondrial (NDUFS8) from Gorilla gorilla gorilla (Western lowland gorilla).